Here is a 521-residue protein sequence, read N- to C-terminus: Glucose-1-phosphate adenylyltransferase small subunit, chloroplastic/amyloplastic (521 aa).

The tract at residues 1–32 (MAASIGALKSSPSSNNCINERRNDSTRAVSSR) is disordered. The transit peptide at 1–72 (MAASIGALKS…RSPMIVSPKA (72 aa)) directs the protein to the chloroplast. A substrate-binding site is contributed by Lys-268. The interval 444 to 454 (TDADRKLLAAK) is allosteric regulation.

This sequence belongs to the bacterial/plant glucose-1-phosphate adenylyltransferase family. In terms of assembly, heterotetramer. Leaves and tubers.

It localises to the plastid. It is found in the chloroplast. The protein resides in the amyloplast. It catalyses the reaction alpha-D-glucose 1-phosphate + ATP + H(+) = ADP-alpha-D-glucose + diphosphate. Its pathway is glycan biosynthesis; starch biosynthesis. With respect to regulation, activated by 3'phosphoglycerate, inhibited by orthophosphate. Allosteric regulation. In terms of biological role, this protein plays a role in synthesis of starch. It catalyzes the synthesis of the activated glycosyl donor, ADP-glucose from Glc-1-P and ATP. This chain is Glucose-1-phosphate adenylyltransferase small subunit, chloroplastic/amyloplastic, found in Solanum tuberosum (Potato).